The sequence spans 101 residues: NAD(P)H-quinone oxidoreductase subunit 4L, chloroplastic (101 aa).

3 helical membrane-spanning segments follow: residues Met2–Ile22, Met32–Phe52, and Ile61–Val81.

The protein belongs to the complex I subunit 4L family. As to quaternary structure, NDH is composed of at least 16 different subunits, 5 of which are encoded in the nucleus.

It is found in the plastid. Its subcellular location is the chloroplast thylakoid membrane. It catalyses the reaction a plastoquinone + NADH + (n+1) H(+)(in) = a plastoquinol + NAD(+) + n H(+)(out). It carries out the reaction a plastoquinone + NADPH + (n+1) H(+)(in) = a plastoquinol + NADP(+) + n H(+)(out). Its function is as follows. NDH shuttles electrons from NAD(P)H:plastoquinone, via FMN and iron-sulfur (Fe-S) centers, to quinones in the photosynthetic chain and possibly in a chloroplast respiratory chain. The immediate electron acceptor for the enzyme in this species is believed to be plastoquinone. Couples the redox reaction to proton translocation, and thus conserves the redox energy in a proton gradient. In Chloranthus spicatus (Chulantree), this protein is NAD(P)H-quinone oxidoreductase subunit 4L, chloroplastic.